The primary structure comprises 215 residues: Cytochrome b6 (215 aa).

The helical transmembrane segment at isoleucine 32 to phenylalanine 52 threads the bilayer. Cysteine 35 lines the heme c pocket. Heme b-binding residues include histidine 86 and histidine 100. 3 helical membrane passes run alanine 90–phenylalanine 110, leucine 116–tyrosine 136, and leucine 186–isoleucine 206. Heme b contacts are provided by histidine 187 and histidine 202.

This sequence belongs to the cytochrome b family. PetB subfamily. As to quaternary structure, the 4 large subunits of the cytochrome b6-f complex are cytochrome b6, subunit IV (17 kDa polypeptide, PetD), cytochrome f and the Rieske protein, while the 4 small subunits are PetG, PetL, PetM and PetN. The complex functions as a dimer. Heme b serves as cofactor. The cofactor is heme c.

It is found in the plastid. It localises to the chloroplast thylakoid membrane. Functionally, component of the cytochrome b6-f complex, which mediates electron transfer between photosystem II (PSII) and photosystem I (PSI), cyclic electron flow around PSI, and state transitions. In Phalaenopsis aphrodite subsp. formosana (Moth orchid), this protein is Cytochrome b6.